A 180-amino-acid polypeptide reads, in one-letter code: Bifunctional protein PyrR (180 aa).

The PRPP-binding motif lies at 101 to 113; the sequence is VILVDDVLYTGRT.

Belongs to the purine/pyrimidine phosphoribosyltransferase family. PyrR subfamily. In terms of assembly, homodimer and homohexamer; in equilibrium.

The catalysed reaction is UMP + diphosphate = 5-phospho-alpha-D-ribose 1-diphosphate + uracil. In terms of biological role, regulates transcriptional attenuation of the pyrimidine nucleotide (pyr) operon by binding in a uridine-dependent manner to specific sites on pyr mRNA. This disrupts an antiterminator hairpin in the RNA and favors formation of a downstream transcription terminator, leading to a reduced expression of downstream genes. Also displays a weak uracil phosphoribosyltransferase activity which is not physiologically significant. The protein is Bifunctional protein PyrR of Bacillus thuringiensis subsp. konkukian (strain 97-27).